Here is a 178-residue protein sequence, read N- to C-terminus: Large ribosomal subunit protein uL6 (178 aa).

It belongs to the universal ribosomal protein uL6 family. Part of the 50S ribosomal subunit.

In terms of biological role, this protein binds to the 23S rRNA, and is important in its secondary structure. It is located near the subunit interface in the base of the L7/L12 stalk, and near the tRNA binding site of the peptidyltransferase center. This chain is Large ribosomal subunit protein uL6, found in Geobacillus kaustophilus (strain HTA426).